The chain runs to 1314 residues: E3 ubiquitin-protein ligase RNF123 (1314 aa).

Ala-2 is modified (N-acetylalanine). A B30.2/SPRY domain is found at 74–254 (VDNEEEESQG…VAFNFGSRPL (181 aa)). Position 675 is a phosphoserine (Ser-675). Arg-683 is subject to Asymmetric dimethylarginine. The interaction with NFKB1 stretch occupies residues 968-974 (WILVRLW). 8 residues coordinate Zn(2+): Cys-1254, Cys-1257, Cys-1269, His-1271, Cys-1274, Cys-1277, Cys-1288, and Cys-1291. Residues 1254 to 1292 (CPICYAHPISAVFQPCGHKSCKACINQHLMNNKDCFFCK) form an RING-type zinc finger.

Component of the KPC complex composed of RNF123/KPC1 and UBAC1/KPC2. Interacts with UBAC1 and CDKN1B via its N-terminal domain. Interacts with RIGI (via N-terminus) and IFIH1 (via N-terminus). In terms of processing, ubiquitinated, leading to its degradation. Deubiquitinated by USP19, thereby stimulating CDKN1B ubiquitin-dependent degradation.

Its subcellular location is the cytoplasm. It catalyses the reaction S-ubiquitinyl-[E2 ubiquitin-conjugating enzyme]-L-cysteine + [acceptor protein]-L-lysine = [E2 ubiquitin-conjugating enzyme]-L-cysteine + N(6)-ubiquitinyl-[acceptor protein]-L-lysine.. The protein operates within protein modification; protein ubiquitination. Its function is as follows. Catalytic subunit of the KPC complex that acts as E3 ubiquitin-protein ligase. Promotes the ubiquitination and proteasome-mediated degradation of CDKN1B which is the cyclin-dependent kinase inhibitor at the G0-G1 transition of the cell cycle. Also acts as a key regulator of the NF-kappa-B signaling by promoting maturation of the NFKB1 component of NF-kappa-B: acts by catalyzing ubiquitination of the NFKB1 p105 precursor, leading to limited proteasomal degradation of NFKB1 p105 and generation of the active NFKB1 p50 subunit. Also functions as an inhibitor of innate antiviral signaling mediated by RIGI and IFIH1 independently of its E3 ligase activity. Interacts with the N-terminal CARD domains of RIGI and IFIH1 and competes with the downstream adapter MAVS. The protein is E3 ubiquitin-protein ligase RNF123 of Homo sapiens (Human).